Consider the following 451-residue polypeptide: Trigger factor (451 aa).

The region spanning 171–256 is the PPIase FKBP-type domain; it reads GDRVKVNFKG…ATAIEAPEDK (86 aa).

The protein belongs to the FKBP-type PPIase family. Tig subfamily.

The protein resides in the cytoplasm. It carries out the reaction [protein]-peptidylproline (omega=180) = [protein]-peptidylproline (omega=0). Functionally, involved in protein export. Acts as a chaperone by maintaining the newly synthesized protein in an open conformation. Functions as a peptidyl-prolyl cis-trans isomerase. The sequence is that of Trigger factor from Bradyrhizobium sp. (strain ORS 278).